Consider the following 425-residue polypeptide: Enolase (425 aa).

Q165 contacts (2R)-2-phosphoglycerate. Catalysis depends on E207, which acts as the Proton donor. The Mg(2+) site is built by D244, E285, and D312. Residues K337, R366, S367, and K388 each contribute to the (2R)-2-phosphoglycerate site. The active-site Proton acceptor is the K337.

It belongs to the enolase family. The cofactor is Mg(2+).

The protein localises to the cytoplasm. It is found in the secreted. The protein resides in the cell surface. It catalyses the reaction (2R)-2-phosphoglycerate = phosphoenolpyruvate + H2O. The protein operates within carbohydrate degradation; glycolysis; pyruvate from D-glyceraldehyde 3-phosphate: step 4/5. Functionally, catalyzes the reversible conversion of 2-phosphoglycerate (2-PG) into phosphoenolpyruvate (PEP). It is essential for the degradation of carbohydrates via glycolysis. This chain is Enolase, found in Wolbachia sp. subsp. Brugia malayi (strain TRS).